The primary structure comprises 104 residues: UPF0145 protein VNG_2432C (104 aa).

The protein belongs to the UPF0145 family.

The protein is UPF0145 protein VNG_2432C of Halobacterium salinarum (strain ATCC 700922 / JCM 11081 / NRC-1) (Halobacterium halobium).